The following is a 257-amino-acid chain: DNA repair protein RecO (257 aa).

This sequence belongs to the RecO family.

Involved in DNA repair and RecF pathway recombination. The chain is DNA repair protein RecO from Synechococcus sp. (strain CC9605).